The following is a 356-amino-acid chain: Histidinol-phosphate aminotransferase 2 (356 aa).

The residue at position 214 (lysine 214) is an N6-(pyridoxal phosphate)lysine.

The protein belongs to the class-II pyridoxal-phosphate-dependent aminotransferase family. Histidinol-phosphate aminotransferase subfamily. Homodimer. Pyridoxal 5'-phosphate serves as cofactor.

The catalysed reaction is L-histidinol phosphate + 2-oxoglutarate = 3-(imidazol-4-yl)-2-oxopropyl phosphate + L-glutamate. It participates in amino-acid biosynthesis; L-histidine biosynthesis; L-histidine from 5-phospho-alpha-D-ribose 1-diphosphate: step 7/9. This Dechloromonas aromatica (strain RCB) protein is Histidinol-phosphate aminotransferase 2.